Consider the following 954-residue polypeptide: Valine--tRNA ligase (954 aa).

Residues 48 to 58 (PNVTGSLHMGH) carry the 'HIGH' region motif. Residues 560–564 (KMSKS) carry the 'KMSKS' region motif. Lysine 563 provides a ligand contact to ATP. Residues 883–954 (AGFINKEAEL…QTQYQAIENL (72 aa)) adopt a coiled-coil conformation.

It belongs to the class-I aminoacyl-tRNA synthetase family. ValS type 1 subfamily. Monomer.

It localises to the cytoplasm. It carries out the reaction tRNA(Val) + L-valine + ATP = L-valyl-tRNA(Val) + AMP + diphosphate. Its function is as follows. Catalyzes the attachment of valine to tRNA(Val). As ValRS can inadvertently accommodate and process structurally similar amino acids such as threonine, to avoid such errors, it has a 'posttransfer' editing activity that hydrolyzes mischarged Thr-tRNA(Val) in a tRNA-dependent manner. This is Valine--tRNA ligase from Actinobacillus pleuropneumoniae serotype 5b (strain L20).